A 390-amino-acid chain; its full sequence is Queuine tRNA-ribosyltransferase (390 aa).

Asp-90 serves as the catalytic Proton acceptor. Residues 90-94 (DSGGF), Asp-144, Gln-197, and Gly-224 contribute to the substrate site. Positions 255 to 261 (GVGTPED) are RNA binding. The Nucleophile role is filled by Asp-274. The tract at residues 279–283 (TRNAR) is RNA binding; important for wobble base 34 recognition. Cys-312, Cys-314, Cys-317, and His-354 together coordinate Zn(2+).

The protein belongs to the queuine tRNA-ribosyltransferase family. In terms of assembly, homodimer. Within each dimer, one monomer is responsible for RNA recognition and catalysis, while the other monomer binds to the replacement base PreQ1. Zn(2+) is required as a cofactor.

The catalysed reaction is 7-aminomethyl-7-carbaguanine + guanosine(34) in tRNA = 7-aminomethyl-7-carbaguanosine(34) in tRNA + guanine. It functions in the pathway tRNA modification; tRNA-queuosine biosynthesis. Catalyzes the base-exchange of a guanine (G) residue with the queuine precursor 7-aminomethyl-7-deazaguanine (PreQ1) at position 34 (anticodon wobble position) in tRNAs with GU(N) anticodons (tRNA-Asp, -Asn, -His and -Tyr). Catalysis occurs through a double-displacement mechanism. The nucleophile active site attacks the C1' of nucleotide 34 to detach the guanine base from the RNA, forming a covalent enzyme-RNA intermediate. The proton acceptor active site deprotonates the incoming PreQ1, allowing a nucleophilic attack on the C1' of the ribose to form the product. After dissociation, two additional enzymatic reactions on the tRNA convert PreQ1 to queuine (Q), resulting in the hypermodified nucleoside queuosine (7-(((4,5-cis-dihydroxy-2-cyclopenten-1-yl)amino)methyl)-7-deazaguanosine). In Leptothrix cholodnii (strain ATCC 51168 / LMG 8142 / SP-6) (Leptothrix discophora (strain SP-6)), this protein is Queuine tRNA-ribosyltransferase.